Here is a 978-residue protein sequence, read N- to C-terminus: LRR receptor-like serine/threonine-protein kinase ER1 (978 aa).

An N-terminal signal peptide occupies residues 1–24 (MTPAPAAASYRALVALLLVAVAVA). The Extracellular segment spans residues 25–577 (DDGSTLLEIK…GHQQKPLISK (553 aa)). Asn-62 and Asn-71 each carry an N-linked (GlcNAc...) asparagine glycan. LRR repeat units lie at residues 66–87 (AVAA…AVGR), 88–112 (LKGI…IGDC), 114–136 (SLKT…VSKL), 137–159 (KHIE…TLSQ), 160–184 (LPNL…IYWN), 186–208 (VLQY…ICQL), 209–232 (TGLW…IGNC), 233–257 (TSFQ…GFLQ), 259–278 (ATLS…VIGL), 279–302 (MQAL…ILGN), 304–327 (TYTE…LGNM), 328–350 (STLH…EFGK), 352–375 (TGLF…ISSC), 377–399 (NLNS…LHKL), 400–423 (ESMT…LSRI), 424–447 (NNLD…IGSL), 449–470 (HLLR…EIGN), 471–494 (LRSI…ELGM), 496–518 (QNLM…LMNC), and 519–543 (FSLN…NFSR). N-linked (GlcNAc...) asparagine glycosylation is found at Asn-218 and Asn-231. 2 N-linked (GlcNAc...) asparagine glycosylation sites follow: Asn-302 and Asn-326. Residues Asn-371, Asn-389, and Asn-406 are each glycosylated (N-linked (GlcNAc...) asparagine). Asn-454 carries N-linked (GlcNAc...) asparagine glycosylation. N-linked (GlcNAc...) asparagine glycans are attached at residues Asn-507, Asn-525, and Asn-540. Residues 578-598 (AAILGIAVGGLVILLMILVAV) traverse the membrane as a helical segment. The Cytoplasmic portion of the chain corresponds to 599–978 (CRPHSPPVFK…FGEVISQNTE (380 aa)). The 272-residue stretch at 645–916 (LSEKYIIGYG…EVVRVLDCLV (272 aa)) folds into the Protein kinase domain. ATP-binding positions include 651 to 659 (IGYGASSTV) and Lys-673. The Proton acceptor role is filled by Asp-771.

The protein belongs to the protein kinase superfamily. Ser/Thr protein kinase family.

The protein resides in the cell membrane. It catalyses the reaction L-seryl-[protein] + ATP = O-phospho-L-seryl-[protein] + ADP + H(+). It carries out the reaction L-threonyl-[protein] + ATP = O-phospho-L-threonyl-[protein] + ADP + H(+). Functionally, receptor kinase involved in the regulation of thermotolerance. Functions as a positive regulator of heat tolerance. May be involved in the regulation of cell proliferation and cell growth. The sequence is that of LRR receptor-like serine/threonine-protein kinase ER1 from Oryza sativa subsp. japonica (Rice).